Here is a 454-residue protein sequence, read N- to C-terminus: MKQNSLNVKQKKLSKIAFSHVGCEKNLVDTEHMQGLLHKEGYEVDSNINDANVVVVNTCSFIETAREESIRKILEYTNQGKEVIVAGCMAQHFKDELIKEIPEIKGLVGTGDYQKIAKVLDRVEKGEIVNEVSKIPEFIADEEMPRFVDKNKFVAYLRIAEGCNYNCAFCIIPKLRGPQRSRTIESILSEAKSLAKKGIQEIILISQITTNYGQDIYGKPSLAKLLNELSKVPIPWIRIHYAYPTGLTDEVIRAFKDSKNIVPYFDLPLQHSHPDVLKSMNRPWQASLNESILEKIREEIPSAVLRTSLIVGFPGEKKEHFEHLLQFLDRHKFDHVGVFIFSPEEGTAAFHLPNKVSPEVAEARKDNVISVQQNISREKNQIYVGSKMKIMVEQISDNNELIGRSYNFAPEIDGTVILSVKEKIDLKNYIGKFVEANISFADEYDLYGETIKIL.

Residues S14 to K125 form the MTTase N-terminal domain. Residues C23, C59, C88, C163, C167, and C170 each coordinate [4Fe-4S] cluster. The region spanning D149–E378 is the Radical SAM core domain. Positions Q381–K452 constitute a TRAM domain.

It belongs to the methylthiotransferase family. RimO subfamily. The cofactor is [4Fe-4S] cluster.

Its subcellular location is the cytoplasm. The catalysed reaction is L-aspartate(89)-[ribosomal protein uS12]-hydrogen + (sulfur carrier)-SH + AH2 + 2 S-adenosyl-L-methionine = 3-methylsulfanyl-L-aspartate(89)-[ribosomal protein uS12]-hydrogen + (sulfur carrier)-H + 5'-deoxyadenosine + L-methionine + A + S-adenosyl-L-homocysteine + 2 H(+). Catalyzes the methylthiolation of an aspartic acid residue of ribosomal protein uS12. This chain is Ribosomal protein uS12 methylthiotransferase RimO, found in Prochlorococcus marinus (strain MIT 9301).